A 516-amino-acid polypeptide reads, in one-letter code: GMP synthase [glutamine-hydrolyzing] (516 aa).

Residues 6 to 198 (KVIIVDYGSQ…LFKIAGIKAD (193 aa)) form the Glutamine amidotransferase type-1 domain. Cys-83 serves as the catalytic Nucleophile. Catalysis depends on residues His-172 and Glu-174. The region spanning 199-391 (WSMSSFCERV…LGLPDFIVWR (193 aa)) is the GMPS ATP-PPase domain. An ATP-binding site is contributed by 227–233 (SGGIDST).

Homodimer.

The enzyme catalyses XMP + L-glutamine + ATP + H2O = GMP + L-glutamate + AMP + diphosphate + 2 H(+). It functions in the pathway purine metabolism; GMP biosynthesis; GMP from XMP (L-Gln route): step 1/1. In terms of biological role, catalyzes the synthesis of GMP from XMP. This is GMP synthase [glutamine-hydrolyzing] from Oleidesulfovibrio alaskensis (strain ATCC BAA-1058 / DSM 17464 / G20) (Desulfovibrio alaskensis).